A 131-amino-acid chain; its full sequence is D-ribose pyranase (131 aa).

H20 acts as the Proton donor in catalysis. Substrate is bound by residues D28, H98, and 120-122 (YAN).

This sequence belongs to the RbsD / FucU family. RbsD subfamily. As to quaternary structure, homodecamer.

It localises to the cytoplasm. The enzyme catalyses beta-D-ribopyranose = beta-D-ribofuranose. It participates in carbohydrate metabolism; D-ribose degradation; D-ribose 5-phosphate from beta-D-ribopyranose: step 1/2. Catalyzes the interconversion of beta-pyran and beta-furan forms of D-ribose. This chain is D-ribose pyranase, found in Bacillus licheniformis (strain ATCC 14580 / DSM 13 / JCM 2505 / CCUG 7422 / NBRC 12200 / NCIMB 9375 / NCTC 10341 / NRRL NRS-1264 / Gibson 46).